Consider the following 92-residue polypeptide: Large ribosomal subunit protein eL43 (92 aa).

Residues 39 to 60 (CSFCGKDSMKRAVVGIWSCKRC) form a C4-type zinc finger.

This sequence belongs to the eukaryotic ribosomal protein eL43 family.

The polypeptide is Large ribosomal subunit protein eL43 (RpL37A) (Drosophila melanogaster (Fruit fly)).